A 484-amino-acid chain; its full sequence is Cysteine--tRNA ligase (484 aa).

Cys-29 contacts Zn(2+). Positions 31 to 41 match the 'HIGH' region motif; it reads PTVQSAPHIGH. The Zn(2+) site is built by Cys-219, His-244, and Glu-248. The short motif at 275–279 is the 'KMSKS' region element; the sequence is KMSKS. ATP is bound at residue Lys-278.

This sequence belongs to the class-I aminoacyl-tRNA synthetase family. As to quaternary structure, monomer. Requires Zn(2+) as cofactor.

It is found in the cytoplasm. The enzyme catalyses tRNA(Cys) + L-cysteine + ATP = L-cysteinyl-tRNA(Cys) + AMP + diphosphate. The chain is Cysteine--tRNA ligase from Clavibacter michiganensis subsp. michiganensis (strain NCPPB 382).